The primary structure comprises 41 residues: Cuticle protein 32 (41 aa).

Tandem repeats lie at residues 17-20 (AAPA), 25-28 (AAPA), 31-34 (AAPA), and 38-41 (AAPA).

In terms of biological role, component of the cuticle of migratory locust which contains more than 100 different structural proteins. The chain is Cuticle protein 32 from Locusta migratoria (Migratory locust).